The chain runs to 153 residues: 3-hydroxyacyl-[acyl-carrier-protein] dehydratase FabZ (153 aa).

Histidine 57 is a catalytic residue.

Belongs to the thioester dehydratase family. FabZ subfamily.

It is found in the cytoplasm. The enzyme catalyses a (3R)-hydroxyacyl-[ACP] = a (2E)-enoyl-[ACP] + H2O. Its function is as follows. Involved in unsaturated fatty acids biosynthesis. Catalyzes the dehydration of short chain beta-hydroxyacyl-ACPs and long chain saturated and unsaturated beta-hydroxyacyl-ACPs. This chain is 3-hydroxyacyl-[acyl-carrier-protein] dehydratase FabZ, found in Aeromonas hydrophila subsp. hydrophila (strain ATCC 7966 / DSM 30187 / BCRC 13018 / CCUG 14551 / JCM 1027 / KCTC 2358 / NCIMB 9240 / NCTC 8049).